Here is a 449-residue protein sequence, read N- to C-terminus: Hyaluronidase-1 (449 aa).

A signal peptide spans 1–23; that stretch reads MYHLWIKCLAAWIFLKRCNGVHA. Disulfide bonds link C47-C340 and C211-C227. N-linked (GlcNAc...) asparagine glycans are attached at residues N67, N103, and N111. E135 acts as the Proton donor in catalysis. Residue N153 is glycosylated (N-linked (GlcNAc...) asparagine). Residue N357 is glycosylated (N-linked (GlcNAc...) asparagine). Disulfide bonds link C365–C376, C370–C427, and C429–C438. The N-linked (GlcNAc...) asparagine glycan is linked to N401. An EGF-like domain is found at 427-438; sequence CQCYQGWKGLYC.

Belongs to the glycosyl hydrolase 56 family. Monomer. Expressed by the venom gland.

It is found in the secreted. It carries out the reaction Random hydrolysis of (1-&gt;4)-linkages between N-acetyl-beta-D-glucosamine and D-glucuronate residues in hyaluronate.. Its function is as follows. Snake venom endo-hyaluronidase that degrades hyaluronan to smaller oligosaccharide fragments. In venom, it is not toxic by itself, but increases the diffusion of other venom proteins by degrading the extracellular matrix. In addition, it displays antiedematogenic activity. The protein is Hyaluronidase-1 of Bitis arietans (African puff adder).